The chain runs to 211 residues: Interleukin-6 (211 aa).

The first 29 residues, 1–29 (MNSLSTSAFSPVAFSLGLLLVMATAFPTP), serve as a signal peptide directing secretion. Cysteine 71 and cysteine 77 form a disulfide bridge. Serine 80 bears the Phosphoserine mark. Residues cysteine 100 and cysteine 110 are joined by a disulfide bond.

The protein belongs to the IL-6 superfamily. Component of a hexamer of two molecules each of IL6, IL6R and IL6ST; first binds to IL6R to associate with the signaling subunit IL6ST. Interacts with IL6R (via the N-terminal ectodomain); this interaction may be affected by IL6R-binding with SORL1, hence decreasing IL6 cis signaling. Interacts with SORL1 (via the N-terminal ectodomain); this interaction leads to IL6 internalization and lysosomal degradation. May form a trimeric complex with the soluble SORL1 ectodomain and soluble IL6R receptor; this interaction might stabilize circulating IL6, hence promoting IL6 trans signaling.

The protein resides in the secreted. In terms of biological role, cytokine with a wide variety of biological functions in immunity, tissue regeneration, and metabolism. Binds to IL6R, then the complex associates to the signaling subunit IL6ST/gp130 to trigger the intracellular IL6-signaling pathway. The interaction with the membrane-bound IL6R and IL6ST stimulates 'classic signaling', whereas the binding of IL6 and soluble IL6R to IL6ST stimulates 'trans-signaling'. Alternatively, 'cluster signaling' occurs when membrane-bound IL6:IL6R complexes on transmitter cells activate IL6ST receptors on neighboring receiver cells. IL6 is a potent inducer of the acute phase response. Rapid production of IL6 contributes to host defense during infection and tissue injury, but excessive IL6 synthesis is involved in disease pathology. In the innate immune response, is synthesized by myeloid cells, such as macrophages and dendritic cells, upon recognition of pathogens through toll-like receptors (TLRs) at the site of infection or tissue injury. In the adaptive immune response, is required for the differentiation of B cells into immunoglobulin-secreting cells. Plays a major role in the differentiation of CD4(+) T cell subsets. Essential factor for the development of T follicular helper (Tfh) cells that are required for the induction of germinal-center formation. Required to drive naive CD4(+) T cells to the Th17 lineage. Also required for proliferation of myeloma cells and the survival of plasmablast cells. Its function is as follows. Acts as an essential factor in bone homeostasis and on vessels directly or indirectly by induction of VEGF, resulting in increased angiogenesis activity and vascular permeability. Induces, through 'trans-signaling' and synergistically with IL1B and TNF, the production of VEGF. Involved in metabolic controls, is discharged into the bloodstream after muscle contraction increasing lipolysis and improving insulin resistance. 'Trans-signaling' in central nervous system also regulates energy and glucose homeostasis. Mediates, through GLP-1, crosstalk between insulin-sensitive tissues, intestinal L cells and pancreatic islets to adapt to changes in insulin demand. Also acts as a myokine. Plays a protective role during liver injury, being required for maintenance of tissue regeneration. Also has a pivotal role in iron metabolism by regulating HAMP/hepcidin expression upon inflammation or bacterial infection. Through activation of IL6ST-YAP-NOTCH pathway, induces inflammation-induced epithelial regeneration. The chain is Interleukin-6 (IL6) from Camelus bactrianus (Bactrian camel).